The sequence spans 133 residues: ATP synthase epsilon chain, chloroplastic (133 aa).

Belongs to the ATPase epsilon chain family. In terms of assembly, F-type ATPases have 2 components, CF(1) - the catalytic core - and CF(0) - the membrane proton channel. CF(1) has five subunits: alpha(3), beta(3), gamma(1), delta(1), epsilon(1). CF(0) has three main subunits: a, b and c.

It localises to the plastid. Its subcellular location is the chloroplast thylakoid membrane. Its function is as follows. Produces ATP from ADP in the presence of a proton gradient across the membrane. The protein is ATP synthase epsilon chain, chloroplastic of Nicotiana tomentosiformis (Tobacco).